We begin with the raw amino-acid sequence, 126 residues long: Methylglyoxal synthase (126 aa).

Residues 1–126 (MAERQKIALI…ADRLLPVITE (126 aa)) form the MGS-like domain. Substrate contacts are provided by residues His12, Lys16, 38 to 41 (TGTT), and 59 to 60 (SG). Residue Asp65 is the Proton donor/acceptor of the active site. His92 lines the substrate pocket.

The protein belongs to the methylglyoxal synthase family.

The enzyme catalyses dihydroxyacetone phosphate = methylglyoxal + phosphate. Catalyzes the formation of methylglyoxal from dihydroxyacetone phosphate. The protein is Methylglyoxal synthase of Allorhizobium ampelinum (strain ATCC BAA-846 / DSM 112012 / S4) (Agrobacterium vitis (strain S4)).